Reading from the N-terminus, the 240-residue chain is Adenylate dimethylallyltransferase (240 aa).

The protein belongs to the isopentenyl transferase family.

It carries out the reaction dimethylallyl diphosphate + AMP = N(6)-(dimethylallyl)adenosine 5'-phosphate + diphosphate. Its function is as follows. Transfers dimethylallyl groups to AMP as part of the biosynthesis of cytokinin phytohormones. The protein is Adenylate dimethylallyltransferase (izt) of Agrobacterium fabrum (strain C58 / ATCC 33970) (Agrobacterium tumefaciens (strain C58)).